Here is a 240-residue protein sequence, read N- to C-terminus: Ribonuclease PH (240 aa).

Phosphate contacts are provided by residues arginine 87 and glycine 125–arginine 127.

Belongs to the RNase PH family. Homohexameric ring arranged as a trimer of dimers.

It carries out the reaction tRNA(n+1) + phosphate = tRNA(n) + a ribonucleoside 5'-diphosphate. In terms of biological role, phosphorolytic 3'-5' exoribonuclease that plays an important role in tRNA 3'-end maturation. Removes nucleotide residues following the 3'-CCA terminus of tRNAs; can also add nucleotides to the ends of RNA molecules by using nucleoside diphosphates as substrates, but this may not be physiologically important. Probably plays a role in initiation of 16S rRNA degradation (leading to ribosome degradation) during starvation. This is Ribonuclease PH from Pseudomonas putida (strain ATCC 47054 / DSM 6125 / CFBP 8728 / NCIMB 11950 / KT2440).